The following is a 425-amino-acid chain: 3-isopropylmalate dehydratase large subunit (425 aa).

Residues cysteine 306, cysteine 366, and cysteine 369 each contribute to the [4Fe-4S] cluster site.

The protein belongs to the aconitase/IPM isomerase family. LeuC type 2 subfamily. Heterodimer of LeuC and LeuD. [4Fe-4S] cluster is required as a cofactor.

The enzyme catalyses (2R,3S)-3-isopropylmalate = (2S)-2-isopropylmalate. The protein operates within amino-acid biosynthesis; L-leucine biosynthesis; L-leucine from 3-methyl-2-oxobutanoate: step 2/4. Functionally, catalyzes the isomerization between 2-isopropylmalate and 3-isopropylmalate, via the formation of 2-isopropylmaleate. This is 3-isopropylmalate dehydratase large subunit from Nautilia profundicola (strain ATCC BAA-1463 / DSM 18972 / AmH).